Here is a 110-residue protein sequence, read N- to C-terminus: Holo-[acyl-carrier-protein] synthase (110 aa).

2 residues coordinate Mg(2+): Asp-8 and Glu-54.

It belongs to the P-Pant transferase superfamily. AcpS family. Requires Mg(2+) as cofactor.

It localises to the cytoplasm. The enzyme catalyses apo-[ACP] + CoA = holo-[ACP] + adenosine 3',5'-bisphosphate + H(+). Functionally, transfers the 4'-phosphopantetheine moiety from coenzyme A to a Ser of acyl-carrier-protein. The protein is Holo-[acyl-carrier-protein] synthase of Mycoplasma capricolum subsp. capricolum (strain California kid / ATCC 27343 / NCTC 10154).